A 613-amino-acid chain; its full sequence is Secretogranin-2 (613 aa).

The N-terminal stretch at 1-27 is a signal peptide; that stretch reads MAEAKTHWLGAVLSLIPLIFLLSEAEA. The propeptide occupies 28-30; the sequence is ASF. Disordered stretches follow at residues 67 to 105 and 119 to 146; these read QQAHKEESSPDYNPYQGVSVPLQQKENGDLPESSRDSLS and QAENEPQSAPKENKPYTLNSEKNFPMDM. A compositionally biased stretch (basic and acidic residues) spans 92 to 105; it reads ENGDLPESSRDSLS. Tyr150 carries the post-translational modification Sulfotyrosine. Ser173, Ser267, Ser428, Ser528, Ser551, and Ser552 each carry phosphoserine. Positions 257–283 are enriched in basic and acidic residues; it reads ESQTQEEVRDSKENADKTEQINDEMKR. Residues 257–287 are disordered; the sequence is ESQTQEEVRDSKENADKTEQINDEMKRSGQL. Positions 546–557 are enriched in basic and acidic residues; the sequence is HLSQHSSQETDK. Residues 546–580 are disordered; that stretch reads HLSQHSSQETDKLASVSKRLPVGTPKSDDTPNRPY.

Belongs to the chromogranin/secretogranin protein family. As to quaternary structure, interacts with Secretogranin III/SCG3. In terms of tissue distribution, highest levels detected in anterior pituitary followed by adrenal medulla and posterior pituitary (at protein level). In the brain, high levels are found in the hypothalamus, comparable to those present in posterior pituitary with two- to six-fold lower levels present in the other brain regions investigated including caudate nucleus, hippocampus, thalamus and brainstem (at protein level).

The protein resides in the secreted. Its function is as follows. Neuroendocrine protein of the granin family that regulates the biogenesis of secretory granules. This chain is Secretogranin-2 (SCG2), found in Bos taurus (Bovine).